We begin with the raw amino-acid sequence, 685 residues long: Acetate--CoA ligase [ADP-forming] I (685 aa).

Residues 477–513 form the ATP-grasp domain; the sequence is LPVLEAYGIEVAPYGIARNVDEARDIAESIGYPVVLK. 503-514 provides a ligand contact to ATP; that stretch reads AESIGYPVVLKV.

It in the N-terminal section; belongs to the acetate CoA ligase alpha subunit family. The protein in the C-terminal section; belongs to the acetate CoA ligase beta subunit family. In terms of assembly, homodimer.

It catalyses the reaction acetate + ATP + CoA = acetyl-CoA + ADP + phosphate. Activity requires divalent metal cations. Its function is as follows. Catalyzes the reversible formation of acetate and ATP from acetyl-CoA by using ADP and phosphate. Can use other substrates such as propionyl-CoA and butyryl-CoA, but not phenylacetyl-CoA. Seems to be involved primarily in the conversion of acetyl-CoA to acetate. Participates in the degradation of branched-chain amino acids via branched-chain-acyl-CoA esters. This Archaeoglobus fulgidus (strain ATCC 49558 / DSM 4304 / JCM 9628 / NBRC 100126 / VC-16) protein is Acetate--CoA ligase [ADP-forming] I.